The primary structure comprises 552 residues: MSAIALTVSMLALVAVLGLWIGNWKIYGVGLGIGGVLFGGIIVGHFAQTYQIVLNGDMLHFIQEFGLILFVYTIGIQVGPGFFSSLRVSGLRLNCFAILMVVVGGLVTAIIHKLFAVPLPIILGVFSGAVTNTPALGAAQQILTDLGSPPQLVSQMGMGYAMAYPFGICGILLVMWLIRLFFKINIDREAKAFDSSYGQNRELLQTMNVAVRNPNLHGLSVQDVPLLNSDEVVCSRLKRGDLLMVPMPATVIEIGDYLHLVGQRDALEKVRLVVGEEVDVTLSTAGTALQTARVVVTNEAVLGKKIRDLNLKQKYDVVITRLNRAGIELVASNSASLQFGDILNLVGRPEAIEAVSAIVGNAQQKLQQVQMLPVFIGVGLGVLLGSIPLFVPGFPAALRLGLAGGPLVVALILGRIGSIGKLYWFMPPSANLALRELGIVLFLSVVGLKSGGDFINTLVNGDGLAWIGYGAMITGIPLLTVGILARMLVKMNYLTLCGMLAGSMTDPPALAFANGLHPTSGAAALSYATVYPLAMFLRIMSPQILAVLFWTL.

6 helical membrane passes run Met1 to Ile21, Ile26 to Phe46, Phe65 to Ser85, Phe96 to Ala116, Leu119 to Ala139, and Met158 to Ile178. RCK C-terminal domains are found at residues Ala192–Glu276 and Asp279–Asn361. 6 consecutive transmembrane segments (helical) span residues Met371–Val391, Gly393–Leu413, Ile439–Val459, Leu464–Leu484, Tyr493–Ala513, and Val530–Trp550.

The protein belongs to the AAE transporter (TC 2.A.81) family. YidE subfamily.

The protein localises to the cell membrane. The sequence is that of Putative transport protein YPN_3727 from Yersinia pestis bv. Antiqua (strain Nepal516).